A 102-amino-acid polypeptide reads, in one-letter code: Large ribosomal subunit protein bL21 (102 aa).

The protein belongs to the bacterial ribosomal protein bL21 family. Part of the 50S ribosomal subunit. Contacts protein L20.

Its function is as follows. This protein binds to 23S rRNA in the presence of protein L20. The polypeptide is Large ribosomal subunit protein bL21 (Saccharopolyspora erythraea (strain ATCC 11635 / DSM 40517 / JCM 4748 / NBRC 13426 / NCIMB 8594 / NRRL 2338)).